We begin with the raw amino-acid sequence, 408 residues long: Histidine--tRNA ligase (408 aa).

Belongs to the class-II aminoacyl-tRNA synthetase family. In terms of assembly, homodimer.

The protein resides in the cytoplasm. It carries out the reaction tRNA(His) + L-histidine + ATP = L-histidyl-tRNA(His) + AMP + diphosphate + H(+). This is Histidine--tRNA ligase from Campylobacter jejuni subsp. jejuni serotype O:2 (strain ATCC 700819 / NCTC 11168).